The primary structure comprises 136 residues: Protein PsiE (136 aa).

4 helical membrane-spanning segments follow: residues 15–35 (ILQTVLNLGLLCLGLILVVFL), 55–75 (YELVEGLVVYFLYFEFIALIV), 82–102 (FHFPLRYFVYIGITAIVRLII), and 108–128 (PLDVLIYSAAILLLVITLWLC).

It belongs to the PsiE family.

The protein resides in the cell inner membrane. This Escherichia coli (strain SE11) protein is Protein PsiE.